A 105-amino-acid polypeptide reads, in one-letter code: Large ribosomal subunit protein bL21 (105 aa).

It belongs to the bacterial ribosomal protein bL21 family. As to quaternary structure, part of the 50S ribosomal subunit. Contacts protein L20.

Functionally, this protein binds to 23S rRNA in the presence of protein L20. This chain is Large ribosomal subunit protein bL21, found in Rickettsia africae (strain ESF-5).